The chain runs to 428 residues: Trigger factor (428 aa).

One can recognise a PPIase FKBP-type domain in the interval 163 to 248; that stretch reads GDTAVIDFEG…VHEVKAKQLP (86 aa).

Belongs to the FKBP-type PPIase family. Tig subfamily.

It localises to the cytoplasm. It carries out the reaction [protein]-peptidylproline (omega=180) = [protein]-peptidylproline (omega=0). Its function is as follows. Involved in protein export. Acts as a chaperone by maintaining the newly synthesized protein in an open conformation. Functions as a peptidyl-prolyl cis-trans isomerase. The sequence is that of Trigger factor from Geobacillus thermodenitrificans (strain NG80-2).